A 296-amino-acid chain; its full sequence is 3-methyl-2-oxobutanoate hydroxymethyltransferase (296 aa).

Residues 1–33 are disordered; it reads MDASDTPTHPAPHPADPAATPYGAPTTPPRPLR. The span at 16–25 shows a compositional bias: low complexity; it reads DPAATPYGAP. Mg(2+)-binding residues include aspartate 77 and aspartate 116. Residues 77–78, aspartate 116, and lysine 146 contribute to the 3-methyl-2-oxobutanoate site; that span reads DS. Glutamate 148 is a binding site for Mg(2+). Glutamate 214 acts as the Proton acceptor in catalysis.

Belongs to the PanB family. Homodecamer; pentamer of dimers. Mg(2+) serves as cofactor.

Its subcellular location is the cytoplasm. The enzyme catalyses 3-methyl-2-oxobutanoate + (6R)-5,10-methylene-5,6,7,8-tetrahydrofolate + H2O = 2-dehydropantoate + (6S)-5,6,7,8-tetrahydrofolate. The protein operates within cofactor biosynthesis; (R)-pantothenate biosynthesis; (R)-pantoate from 3-methyl-2-oxobutanoate: step 1/2. In terms of biological role, catalyzes the reversible reaction in which hydroxymethyl group from 5,10-methylenetetrahydrofolate is transferred onto alpha-ketoisovalerate to form ketopantoate. This chain is 3-methyl-2-oxobutanoate hydroxymethyltransferase, found in Frankia casuarinae (strain DSM 45818 / CECT 9043 / HFP020203 / CcI3).